The following is a 249-amino-acid chain: Uridylate kinase (249 aa).

21–24 (KLSG) serves as a coordination point for ATP. Gly-63 is a binding site for UMP. ATP-binding residues include Gly-64 and Arg-68. Residues Asp-84 and 145–152 (TGNPFVTT) contribute to the UMP site. Positions 172, 178, and 181 each coordinate ATP.

It belongs to the UMP kinase family. Homohexamer.

The protein localises to the cytoplasm. It catalyses the reaction UMP + ATP = UDP + ADP. It participates in pyrimidine metabolism; CTP biosynthesis via de novo pathway; UDP from UMP (UMPK route): step 1/1. Inhibited by UTP. In terms of biological role, catalyzes the reversible phosphorylation of UMP to UDP. This Francisella tularensis subsp. holarctica (strain FTNF002-00 / FTA) protein is Uridylate kinase.